Reading from the N-terminus, the 794-residue chain is Protein SPA1-RELATED 4 (794 aa).

One can recognise a Protein kinase domain in the interval 1–268; the sequence is MKGSSESSSR…MSELLQSEFI (268 aa). The segment at 126–165 is disordered; the sequence is SCSDSGSDEDATTKSREIGSSRQEEILSERRSKQQEEVKK. The segment covering 136-165 has biased composition (basic and acidic residues); the sequence is ATTKSREIGSSRQEEILSERRSKQQEEVKK. Residues 272–326 are a coiled coil; sequence RENLEEREAAMELRDRIEEQELLLEFLFLIQQRKQEAADKLQDTISLLSSDIDQV. 2 disordered regions span residues 352–373 and 428–447; these read QGAE…EESK and GRSS…INDS. The segment covering 358–369 has biased composition (acidic residues); it reads AAEEENDDNSID. 7 WD repeats span residues 482-521, 531-571, 574-614, 616-656, 660-698, 707-746, and 762-794; these read NSSN…KDGR, ASRS…LVTE, EHEK…SIGT, KTKA…LPLC, GHHK…SGIN, GHTN…PVLS, and DASQ…LEMV. Positions 635-649 match the DWD box motif; it reads AFGSADHKVYYYDLR.

As to quaternary structure, interacts with COP1 and CO. Binds to CRY1 in response to blue light, this interaction prevents SPA1/COP1 complex formation and thus avoid COP1-dependent degradation of the transcription factor HY5 by the proteasome and promotes hypocotyl elongation.

Its subcellular location is the nucleus. Functionally, repressor of photomorphogenesis in the light. Probably part of the COP1/SPA E3 ubiquitin-protein ligase complex. The protein is Protein SPA1-RELATED 4 (SPA4) of Arabidopsis thaliana (Mouse-ear cress).